Reading from the N-terminus, the 143-residue chain is Small ribosomal subunit protein uS11c (143 aa).

This sequence belongs to the universal ribosomal protein uS11 family. Part of the 30S ribosomal subunit.

Its subcellular location is the plastid. The protein resides in the chloroplast. The chain is Small ribosomal subunit protein uS11c from Brachypodium distachyon (Purple false brome).